Consider the following 354-residue polypeptide: NADH-quinone oxidoreductase subunit H (354 aa).

8 helical membrane-spanning segments follow: residues 25 to 45 (LVRI…LILW), 91 to 111 (WLYL…WAVI), 126 to 146 (LLYA…AGWA), 170 to 190 (MGFA…SEIV), 205 to 225 (FLSW…ISGI), 253 to 273 (MAFA…SALA), 290 to 310 (FIPG…VFIW), and 330 to 350 (VFLP…MSPL).

This sequence belongs to the complex I subunit 1 family. As to quaternary structure, NDH-1 is composed of 14 different subunits. Subunits NuoA, H, J, K, L, M, N constitute the membrane sector of the complex.

Its subcellular location is the cell inner membrane. It carries out the reaction a quinone + NADH + 5 H(+)(in) = a quinol + NAD(+) + 4 H(+)(out). Its function is as follows. NDH-1 shuttles electrons from NADH, via FMN and iron-sulfur (Fe-S) centers, to quinones in the respiratory chain. The immediate electron acceptor for the enzyme in this species is believed to be ubiquinone. Couples the redox reaction to proton translocation (for every two electrons transferred, four hydrogen ions are translocated across the cytoplasmic membrane), and thus conserves the redox energy in a proton gradient. This subunit may bind ubiquinone. The protein is NADH-quinone oxidoreductase subunit H of Burkholderia mallei (strain ATCC 23344).